A 246-amino-acid polypeptide reads, in one-letter code: Ubiquitin-conjugating enzyme E2 6 (246 aa).

At 1–224 (MATKQAQKRL…LEKQHNDKPN (224 aa)) the chain is on the cytoplasmic side. The UBC core domain maps to 5–154 (QAQKRLTKEY…FNSTRFKLVF (150 aa)). Cys87 serves as the catalytic Glycyl thioester intermediate. A helical transmembrane segment spans residues 225-245 (GSSSMFYIGVALFLFLVGLFM).

This sequence belongs to the ubiquitin-conjugating enzyme family.

It localises to the endoplasmic reticulum membrane. The catalysed reaction is S-ubiquitinyl-[E1 ubiquitin-activating enzyme]-L-cysteine + [E2 ubiquitin-conjugating enzyme]-L-cysteine = [E1 ubiquitin-activating enzyme]-L-cysteine + S-ubiquitinyl-[E2 ubiquitin-conjugating enzyme]-L-cysteine.. The protein operates within protein modification; protein ubiquitination. Functionally, catalyzes the covalent attachment of ubiquitin to other proteins. Functions in degradation of misfolded or regulated proteins localized in the endoplasmic reticulum (ER) lumen or membrane via the ubiquitin-proteasome system. Cognate E2 conjugating enzyme for the DOA10 ubiquitin ligase complex, which is part of the ERAD-C pathway responsible for the rapid degradation of membrane proteins with misfolded cytoplasmic domains. This Candida glabrata (strain ATCC 2001 / BCRC 20586 / JCM 3761 / NBRC 0622 / NRRL Y-65 / CBS 138) (Yeast) protein is Ubiquitin-conjugating enzyme E2 6 (UBC6).